Consider the following 273-residue polypeptide: Undecaprenyl-diphosphatase (273 aa).

The next 7 helical transmembrane spans lie at 4 to 24 (LILLKALLLGIVEGLTEFLPI), 43 to 63 (KAKVFTVAIQLGAILAVCWEY), 82 to 102 (FVINLFIAFLPAAILGLLFIK), 108 to 128 (LFHPMPVAIALVTGGILILWA), 183 to 203 (AAEFSFFLAIPVMFAATFYDV), 217 to 237 (MFATGSVAAFISALIAIRGFI), and 248 to 268 (FAWYRIGFGLIVLLTAYSGLV).

It belongs to the UppP family.

The protein localises to the cell inner membrane. It carries out the reaction di-trans,octa-cis-undecaprenyl diphosphate + H2O = di-trans,octa-cis-undecaprenyl phosphate + phosphate + H(+). Catalyzes the dephosphorylation of undecaprenyl diphosphate (UPP). Confers resistance to bacitracin. The sequence is that of Undecaprenyl-diphosphatase from Nitrosomonas europaea (strain ATCC 19718 / CIP 103999 / KCTC 2705 / NBRC 14298).